A 193-amino-acid polypeptide reads, in one-letter code: Acyl carrier protein phosphodiesterase (193 aa).

This sequence belongs to the AcpH family.

The catalysed reaction is holo-[ACP] + H2O = apo-[ACP] + (R)-4'-phosphopantetheine + H(+). Its function is as follows. Converts holo-ACP to apo-ACP by hydrolytic cleavage of the phosphopantetheine prosthetic group from ACP. The sequence is that of Acyl carrier protein phosphodiesterase from Escherichia coli O7:K1 (strain IAI39 / ExPEC).